The chain runs to 284 residues: Methylglyoxal reductase YeaE (284 aa).

The protein belongs to the aldo/keto reductase family.

It carries out the reaction hydroxyacetone + NADP(+) = methylglyoxal + NADPH + H(+). It catalyses the reaction a primary alcohol + NADP(+) = an aldehyde + NADPH + H(+). In terms of biological role, aldo-keto reductase that contributes to cellular methylglyoxal detoxification by catalyzing the NADPH-dependent conversion of methylglyoxal to acetol. It also exhibits activity with glyoxal and probably plays a significant role in detoxification of glyoxal in vivo. Can also use aromatic aldehydes such as 4-nitrobenzaldehyde, 3-nitrobenzaldehyde and benzaldehyde, and phenylglyoxal. This is Methylglyoxal reductase YeaE (yeaE) from Escherichia coli (strain K12).